The chain runs to 560 residues: MSQRMQQGQPMIILGEDSQRTSGQDAQSMNITAGKAVAEAVRTTLGPKGMDKMLVDSGGQVVVTNDGVTILKEMDIDHPAANMIVEVSETQEDEVGDGTTTAVINAGELLDQAEDLLDSDVHATTIAQGYRQAAEKAKEVLEDNAIEVTEDDRETLTKIAATAMTGKGAESAKDLLSELVVDAVLAVKDDDGIDTNNVSIEKVVGGTIDNSELVEGVIVDKERVDENMPYAVEDANIAILDDALEVRETEIDAEVNVTDPDQLQQFLDQEEKQLKEMVDQLVEVGADAVFVGDGIDDMAQHYLAKEGILAVRRAKSSDLKRLARATGGRVVSSLDDIEADDLGFAGSVGQKDVGGDERIFVEDVEDAKSVTLILRGGTEHVVDELERAIEDSLGVVRTTLEDGKVLPGGGAPETELSLQLREFADSVGGREQLAVEAFAEALDIIPRTLAENAGLDPIDSLVDLRSRHDGGEFAAGLDAYTGEVIDMEEEGVVEPLRVKTQAIESATEAAVMILRIDDVIAAGDLSGGQTGSDDDDGGAPGGMGGGMGGMGGMGGMGGAM.

The tract at residues Leu525–Met550 is disordered. Over residues Gly538–Met550 the composition is skewed to gly residues.

This sequence belongs to the TCP-1 chaperonin family. In terms of assembly, the thermosome or CCT complex is a oligomeric complex of two octameric double-ring structures; the complex is probably a heterooligomer of CCT1, CCT2 and CCT3 with yet unknown stoichiometry.

Its function is as follows. Molecular chaperone that assists in the folding or refolding of nascent or denatured proteins along with ATP hydrolysis. ATPase activity is highest in thermosome assemblies containing CCT1:CCT2, followed by assemblies containing CCT1:CCT2:CCT3. Required for thermosome ATPase activity. Not required for growth. The chain is Thermosome subunit 1 (cct1) from Haloferax volcanii (strain ATCC 29605 / DSM 3757 / JCM 8879 / NBRC 14742 / NCIMB 2012 / VKM B-1768 / DS2) (Halobacterium volcanii).